The sequence spans 151 residues: MSTPDNRSVNFFSLFRRGQHYSKTWPLEKRLAPVFVENRVIKMTRYAIRFMPPIAVFTLCWQIALGGQLGPAVATALFALSLPMQGLWWLGKRSVTPLPPAILNWFYEVRGKLQESGQVLAPVEGKPDYQALADTLKRAFKQLDKTFLDDL.

Transmembrane regions (helical) follow at residues 46 to 65 (YAIRFMPPIAVFTLCWQIAL) and 69 to 91 (LGPAVATALFALSLPMQGLWWLG).

Belongs to the UPF0208 family.

The protein localises to the cell inner membrane. The chain is UPF0208 membrane protein YfbV from Shigella boydii serotype 18 (strain CDC 3083-94 / BS512).